Here is a 137-residue protein sequence, read N- to C-terminus: Nucleoside diphosphate kinase (137 aa).

The ATP site is built by K10, F59, R87, T93, R104, and N114. The active-site Pros-phosphohistidine intermediate is the H117.

The protein belongs to the NDK family. Homotetramer. The cofactor is Mg(2+).

The protein localises to the cytoplasm. The catalysed reaction is a 2'-deoxyribonucleoside 5'-diphosphate + ATP = a 2'-deoxyribonucleoside 5'-triphosphate + ADP. It carries out the reaction a ribonucleoside 5'-diphosphate + ATP = a ribonucleoside 5'-triphosphate + ADP. Functionally, major role in the synthesis of nucleoside triphosphates other than ATP. The ATP gamma phosphate is transferred to the NDP beta phosphate via a ping-pong mechanism, using a phosphorylated active-site intermediate. The chain is Nucleoside diphosphate kinase from Streptomyces coelicolor (strain ATCC BAA-471 / A3(2) / M145).